The sequence spans 360 residues: Phenylalanine--tRNA ligase alpha subunit (360 aa).

A Mg(2+)-binding site is contributed by Glu260.

Belongs to the class-II aminoacyl-tRNA synthetase family. Phe-tRNA synthetase alpha subunit type 1 subfamily. As to quaternary structure, tetramer of two alpha and two beta subunits. Requires Mg(2+) as cofactor.

It localises to the cytoplasm. It carries out the reaction tRNA(Phe) + L-phenylalanine + ATP = L-phenylalanyl-tRNA(Phe) + AMP + diphosphate + H(+). The polypeptide is Phenylalanine--tRNA ligase alpha subunit (Agrobacterium fabrum (strain C58 / ATCC 33970) (Agrobacterium tumefaciens (strain C58))).